Here is a 704-residue protein sequence, read N- to C-terminus: Low calcium response locus protein D (704 aa).

A run of 7 helical transmembrane segments spans residues 18–35 (IMLA…VLPL), 42–61 (ILIA…AIYI), 108–132 (FVVG…FLVI), 200–220 (AIAG…IGVT), 235–259 (ILTV…GIIV), 278–297 (VVAQ…LFGL), and 304–320 (VTFL…GYML).

It belongs to the FHIPEP (flagella/HR/invasion proteins export pore) family.

The protein resides in the cell inner membrane. Could be involved in the secretion of the yop virulence proteins. The protein is Low calcium response locus protein D (lcrD) of Yersinia pestis.